A 1073-amino-acid polypeptide reads, in one-letter code: MPKRTDIKSILILGAGPIVIGQACEFDYSGAQACKALREEGFRVILVNSNPATIMTDPAMADATYIEPIKWQSVAKIIEKERPDAVLPTMGGQTALNCALDLERHGVLEKFGVEMIGANADTIDKAEDRSRFDKAMKDIGLECPRSGIAHSMEEANAVLEKLGFPCIIRPSFTMGGTGGGIAYNREEFEEICTRGLDLSPTKELLIDESLIGWKEYEMEVVRDKKDNCIIVCSIENFDPMGVHTGDSITVAPAQTLTDKEYQIMRNASLAVLREIGVETGGSNVQFGICPNTGRMVVIEMNPRVSRSSALASKATGFPIAKIAAKLAIGYTLDELQNDITGGRTPASFEPSIDYVVTKLPRFAFEKFPKADARLTTQMKSVGEVMAIGRTFQESLQKALRGLEVGACGLDPKVDLASPEAASILKRELTVPGAERIWYVADAMRSGMTCEEIFNLTGIDMWFLVQMEDLIKEEEKVKTLALSAIDKDYMLRLKRKGFSDQRLAVLLGITDKNLRRHRHKLEVFPVYKRVDTCAAEFATDTAYLYSTYEEECEANPSTRDKIMILGGGPNRIGQGIEFDYCCVHAALALREDGYETIMVNCNPETVSTDYDTSDRLYFEPLTLEDVLEVCRVEKPKGVIVHYGGQTPLKLARALEEAGVPIIGTSPDAIDRAEDRERFQQMVQRLSLLQPPNATVRSEEEAIRAAGSIGYPLVVRPSYVLGGRAMEIVYELDELKRYLREAVQVSNDSPVLLDHFLNCAIEMDVDAVCDGTDVVIGAIMQHIEQAGVHSGDSACSLPPYSLSKEVQDEVRVQVKKMALELGVVGLMNVQLALQGDKIYVIEVNPRASRTVPFVSKCIGTSLAMIAARVMAGKTLKELGFTQEIIPNFYSVKEAVFPFAKFPGVDPILGPEMKSTGEVMGVGDSFGEAFAKAQMGASEVLPTGGTAFISVRDDDKPQVAGVARDLIALGFEVVATAGTAKVIEAAGLKVRRVNKVTEGRPHVVDMIKNDEVSLIINTTEGRQSIADSYSIRRNALQHKIYCTTTIAAGEAICEALKFGPEKTVRRLQDLHAGLKA.

The interval 1-403 (MPKRTDIKSI…SLQKALRGLE (403 aa)) is carboxyphosphate synthetic domain. Residues R129, R169, G175, G176, E208, L210, E215, G241, V242, H243, Q285, and E299 each coordinate ATP. Positions 133-328 (DKAMKDIGLE…IAKIAAKLAI (196 aa)) constitute an ATP-grasp 1 domain. Residues Q285, E299, and N301 each contribute to the Mg(2+) site. Residues Q285, E299, and N301 each contribute to the Mn(2+) site. The segment at 404 to 553 (VGACGLDPKV…YSTYEEECEA (150 aa)) is oligomerization domain. The carbamoyl phosphate synthetic domain stretch occupies residues 554–935 (NPSTRDKIMI…AFAKAQMGAS (382 aa)). Residues 678–869 (QQMVQRLSLL…LAMIAARVMA (192 aa)) form the ATP-grasp 2 domain. ATP is bound by residues R714, H753, L755, E760, G785, V786, H787, S788, Q828, and E840. Mg(2+) contacts are provided by Q828, E840, and N842. Q828, E840, and N842 together coordinate Mn(2+). In terms of domain architecture, MGS-like spans 936 to 1073 (EVLPTGGTAF…LQDLHAGLKA (138 aa)). Residues 936 to 1073 (EVLPTGGTAF…LQDLHAGLKA (138 aa)) are allosteric domain.

It belongs to the CarB family. Composed of two chains; the small (or glutamine) chain promotes the hydrolysis of glutamine to ammonia, which is used by the large (or ammonia) chain to synthesize carbamoyl phosphate. Tetramer of heterodimers (alpha,beta)4. The cofactor is Mg(2+). It depends on Mn(2+) as a cofactor.

It catalyses the reaction hydrogencarbonate + L-glutamine + 2 ATP + H2O = carbamoyl phosphate + L-glutamate + 2 ADP + phosphate + 2 H(+). The catalysed reaction is hydrogencarbonate + NH4(+) + 2 ATP = carbamoyl phosphate + 2 ADP + phosphate + 2 H(+). It functions in the pathway amino-acid biosynthesis; L-arginine biosynthesis; carbamoyl phosphate from bicarbonate: step 1/1. Its pathway is pyrimidine metabolism; UMP biosynthesis via de novo pathway; (S)-dihydroorotate from bicarbonate: step 1/3. Functionally, large subunit of the glutamine-dependent carbamoyl phosphate synthetase (CPSase). CPSase catalyzes the formation of carbamoyl phosphate from the ammonia moiety of glutamine, carbonate, and phosphate donated by ATP, constituting the first step of 2 biosynthetic pathways, one leading to arginine and/or urea and the other to pyrimidine nucleotides. The large subunit (synthetase) binds the substrates ammonia (free or transferred from glutamine from the small subunit), hydrogencarbonate and ATP and carries out an ATP-coupled ligase reaction, activating hydrogencarbonate by forming carboxy phosphate which reacts with ammonia to form carbamoyl phosphate. The polypeptide is Carbamoyl phosphate synthase large chain (Pseudomonas putida (strain ATCC 47054 / DSM 6125 / CFBP 8728 / NCIMB 11950 / KT2440)).